The chain runs to 301 residues: ADP,ATP carrier protein 1 (301 aa).

Solcar repeat units follow at residues 8–100 (YGFA…YKQV), 113–203 (RYFL…AKGM), and 210–299 (TSIF…VKAL). Transmembrane regions (helical) follow at residues 10–39 (FAKDFLAGGISAAVSKTAVAPIERVKLLLQ), 77–101 (LANVIRYFPTQALNFAFKDVYKQVF), 112–132 (WRYFLGNLGSGGAAGATSLCF), 181–201 (VSVQGIIIYRAAYFGCFDTAK), and 213–233 (FVSWAIAQVVTTASGIISYPF). Positions 82 and 94 each coordinate ADP. R237 serves as a coordination point for ADP. An important for transport activity region spans residues 237–242 (RRRMMM). The short motif at 237–242 (RRRMMM) is the Nucleotide carrier signature motif element. The helical transmembrane segment at 276–293 (AFSNVLRGTGGALVLVFY) threads the bilayer.

This sequence belongs to the mitochondrial carrier (TC 2.A.29) family. Monomer.

It localises to the mitochondrion inner membrane. The catalysed reaction is ADP(in) + ATP(out) = ADP(out) + ATP(in). With respect to regulation, the matrix-open state (m-state) is inhibited by the membrane-permeable bongkrekic acid (BKA). The cytoplasmic-open state (c-state) is inhibited by the membrane-impermeable toxic inhibitor carboxyatractyloside (CATR). In terms of biological role, ADP:ATP antiporter that mediates import of ADP into the mitochondrial matrix for ATP synthesis, and export of ATP out to fuel the cell. Cycles between the cytoplasmic-open state (c-state) and the matrix-open state (m-state): operates by the alternating access mechanism with a single substrate-binding site intermittently exposed to either the cytosolic (c-state) or matrix (m-state) side of the inner mitochondrial membrane. The sequence is that of ADP,ATP carrier protein 1 from Anopheles gambiae (African malaria mosquito).